The primary structure comprises 296 residues: Phosphatidylglycerol--prolipoprotein diacylglyceryl transferase (296 aa).

Helical transmembrane passes span 17–37 (LAVR…IVVG), 59–79 (MMFY…VLFY), and 97–117 (GGMS…LFAW). Arg-142 contributes to the a 1,2-diacyl-sn-glycero-3-phospho-(1'-sn-glycerol) binding site. A run of 2 helical transmembrane segments spans residues 230–250 (MGAI…TVEF) and 265–285 (LSMG…MMIW).

This sequence belongs to the Lgt family.

The protein resides in the cell inner membrane. The enzyme catalyses L-cysteinyl-[prolipoprotein] + a 1,2-diacyl-sn-glycero-3-phospho-(1'-sn-glycerol) = an S-1,2-diacyl-sn-glyceryl-L-cysteinyl-[prolipoprotein] + sn-glycerol 1-phosphate + H(+). It participates in protein modification; lipoprotein biosynthesis (diacylglyceryl transfer). Catalyzes the transfer of the diacylglyceryl group from phosphatidylglycerol to the sulfhydryl group of the N-terminal cysteine of a prolipoprotein, the first step in the formation of mature lipoproteins. The protein is Phosphatidylglycerol--prolipoprotein diacylglyceryl transferase of Burkholderia thailandensis (strain ATCC 700388 / DSM 13276 / CCUG 48851 / CIP 106301 / E264).